Consider the following 518-residue polypeptide: Protein PNS1 (518 aa).

The span at 1 to 14 (MSDYPPPNYPPPNH) shows a compositional bias: pro residues. The segment at 1 to 24 (MSDYPPPNYPPPNHPQYQQQQDET) is disordered. At 1 to 63 (MSDYPPPNYP…KVEKPKFNDW (63 aa)) the chain is on the cytoplasmic side. The chain crosses the membrane as a helical span at residues 64–84 (PFAIFFWLVVAGFIAVAGITL). The Extracellular portion of the chain corresponds to 85–111 (NALRSTYGFQGGSIYGSGNTFTLNTNT). The helical transmembrane segment at 112–132 (IILFAFIIVMAFILSAAIIVF) threads the bilayer. At 133-139 (ARLAPKA) the chain is on the cytoplasmic side. The chain crosses the membrane as a helical span at residues 140 to 160 (FIVTGVILNVVLGIGTAIFYF). Over 161–163 (VEK) the chain is Extracellular. The chain crosses the membrane as a helical span at residues 164–184 (YYSAAIVFLIFALFGAWCYWS). Residues 185–210 (SRHRIPLSATILTIVIDVMKMYPSTL) are Cytoplasmic-facing. A helical transmembrane segment spans residues 211–231 (IASFIGLIFSAAFSALFSIVI). The Extracellular portion of the chain corresponds to 232-256 (VATYVKYDPNSNNEACSVGGGSCSK). A helical membrane pass occupies residues 257–277 (GKLIGVLVFVFFAGYYISEVI). Residues 278–314 (RNVIHVVIAGIYGTWYYLANSDQGAPKHPALSSLKRA) lie on the Cytoplasmic side of the membrane. A helical membrane pass occupies residues 315 to 335 (LTYCFGSITFGSLIVSLIQLL). The Extracellular portion of the chain corresponds to 336–351 (RQFISILRSNFAADGN). Residues 352-372 (GWGVCGMIILDFFVGFIDWLV) form a helical membrane-spanning segment. The Cytoplasmic segment spans residues 373–417 (RYLNKYAYCYVALYGKSYIKSAKDTFDLIRFKGMDALINDMFINT). A helical membrane pass occupies residues 418 to 438 (ALNLYSLFVAYLVALLAYLYL). Topologically, residues 439 to 445 (KFTKPEY) are extracellular. Residues 446–466 (NSGGAFYAPVIAFAFLIAGQI) form a helical membrane-spanning segment. Topologically, residues 467–518 (NRISLTVIESGTATFFVALAKDPEIFQMTNRNRFDDIFRNYPQVLEKITSDH) are cytoplasmic.

The protein belongs to the CTL (choline transporter-like) family.

Its subcellular location is the cell membrane. In terms of biological role, probably involved in transport through the plasma membrane. This Candida albicans (strain SC5314 / ATCC MYA-2876) (Yeast) protein is Protein PNS1 (PNS1).